A 368-amino-acid polypeptide reads, in one-letter code: CST complex subunit STN1 (368 aa).

The interaction with CTC1 stretch occupies residues 1–185 (MQPGSSRCEE…KIYDQPFRSS (185 aa)). Residues 57–155 (VDVLGTVVGV…EIHATAYYKV (99 aa)) constitute a DNA-binding region (OB). Winged helix-turn-helix (wHTH) stretches follow at residues 191-295 (EALS…YVTR) and 296-368 (EDKD…YTAF).

This sequence belongs to the STN1 family. Component of the CST complex, composed of TEN1/C17orf106, CTC1/C17orf68 and STN1; in the complex interacts directly with TEN1 and CTC1. Interacts with ACD/TPP1, POT1 and POLA1.

It is found in the nucleus. The protein resides in the chromosome. The protein localises to the telomere. Component of the CST complex proposed to act as a specialized replication factor promoting DNA replication under conditions of replication stress or natural replication barriers such as the telomere duplex. The CST complex binds single-stranded DNA with high affinity in a sequence-independent manner, while isolated subunits bind DNA with low affinity by themselves. Initially the CST complex has been proposed to protect telomeres from DNA degradation. However, the CST complex has been shown to be involved in several aspects of telomere replication. The CST complex inhibits telomerase and is involved in telomere length homeostasis; it is proposed to bind to newly telomerase-synthesized 3' overhangs and to terminate telomerase action implicating the association with the ACD:POT1 complex thus interfering with its telomerase stimulation activity. The CST complex is also proposed to be involved in fill-in synthesis of the telomeric C-strand probably implicating recruitment and activation of DNA polymerase alpha. The CST complex facilitates recovery from many forms of exogenous DNA damage; seems to be involved in the re-initiation of DNA replication at repaired forks and/or dormant origins. Required for efficicient replication of the duplex region of the telomere. Promotes efficient replication of lagging-strand telomeres. Promotes general replication start following replication-fork stalling implicating new origin firing. May be in involved in C-strand fill-in during late S/G2 phase independent of its role in telomere duplex replication. The protein is CST complex subunit STN1 of Macaca fascicularis (Crab-eating macaque).